Reading from the N-terminus, the 757-residue chain is Cellulose synthase-like protein B5 (757 aa).

The next 2 membrane-spanning stretches (helical) occupy residues 24 to 44 (AVDLTILGLLYSLLLYRILHI) and 50 to 70 (VWLLAFFCESCFSLVWLIFTC). Residues aspartate 136 and aspartate 460 contribute to the active site. 6 consecutive transmembrane segments (helical) span residues 531–551 (LAYFWALMCLRSIPELIYCLL), 572–592 (IVTLVGMHCLYSLWQFMSLGF), 613–633 (LFSIQDIILKLLGISQIGFVI), 671–691 (LFIPGTFIMLVNLAALAGYLV), 704–724 (GSGLAEACGCILVVMLFLPFL), and 735–755 (IPLSTLSKAAFLTVLFVFFCV).

Belongs to the glycosyltransferase 2 family. Plant cellulose synthase-like B subfamily. Expressed in young seedlings, primarily in the vascular tissue. Expressed in the root cap.

Its subcellular location is the golgi apparatus membrane. Its function is as follows. Thought to be a Golgi-localized beta-glycan synthase that polymerize the backbones of noncellulosic polysaccharides (hemicelluloses) of plant cell wall. The sequence is that of Cellulose synthase-like protein B5 (CSLB5) from Arabidopsis thaliana (Mouse-ear cress).